Reading from the N-terminus, the 519-residue chain is Probable cytochrome P450 6g2 (519 aa).

C460 lines the heme pocket.

It belongs to the cytochrome P450 family. Requires heme as cofactor.

It is found in the endoplasmic reticulum membrane. The protein resides in the microsome membrane. Its function is as follows. May be involved in the metabolism of insect hormones and in the breakdown of synthetic insecticides. The polypeptide is Probable cytochrome P450 6g2 (Cyp6g2) (Drosophila melanogaster (Fruit fly)).